The primary structure comprises 193 residues: ATP synthase subunit b (193 aa).

A helical membrane pass occupies residues 24–44 (PLAELIVGLLAFGLLVGFFFW).

This sequence belongs to the ATPase B chain family. F-type ATPases have 2 components, F(1) - the catalytic core - and F(0) - the membrane proton channel. F(1) has five subunits: alpha(3), beta(3), gamma(1), delta(1), epsilon(1). F(0) has three main subunits: a(1), b(2) and c(10-14). The alpha and beta chains form an alternating ring which encloses part of the gamma chain. F(1) is attached to F(0) by a central stalk formed by the gamma and epsilon chains, while a peripheral stalk is formed by the delta and b chains.

The protein localises to the cell membrane. F(1)F(0) ATP synthase produces ATP from ADP in the presence of a proton or sodium gradient. F-type ATPases consist of two structural domains, F(1) containing the extramembraneous catalytic core and F(0) containing the membrane proton channel, linked together by a central stalk and a peripheral stalk. During catalysis, ATP synthesis in the catalytic domain of F(1) is coupled via a rotary mechanism of the central stalk subunits to proton translocation. Its function is as follows. Component of the F(0) channel, it forms part of the peripheral stalk, linking F(1) to F(0). This chain is ATP synthase subunit b, found in Parafrankia sp. (strain EAN1pec).